Reading from the N-terminus, the 180-residue chain is Der GTPase-activating protein YihI (180 aa).

Over residues 1-10 the composition is skewed to polar residues; that stretch reads MKQPARTSQV. 2 disordered regions span residues 1 to 102 and 158 to 180; these read MKQP…PRLT and DAED…RTPE. Positions 21–32 are enriched in basic and acidic residues; sequence TREEINQEARDR. Residues 45–54 are compositionally biased toward polar residues; the sequence is SRANPATVSQ. Basic and acidic residues predominate over residues 55–67; sequence KGDKSQSVKDPRI. Positions 84 to 93 are enriched in low complexity; that stretch reads PANPVKAAKP.

It belongs to the YihI family. Interacts with Der.

A GTPase-activating protein (GAP) that modifies Der/EngA GTPase function. May play a role in ribosome biogenesis. The chain is Der GTPase-activating protein YihI from Erwinia tasmaniensis (strain DSM 17950 / CFBP 7177 / CIP 109463 / NCPPB 4357 / Et1/99).